Consider the following 379-residue polypeptide: MANLRKTHPLLKIANDALVDLPTPSNISAWWNFGSLLGLCLISQILTGLFLAMHYTSDISTAFSSVAHICRDVNYGWLIRNLHANGASFFFICLYLHIARGLYYGSYLYKETWNIGVVLFLLVMMTAFVGYVLPWGQMSFWGATVITNLLSAVPYVGNSLVQWIWGGFSVDNATLTRFFAFHFLFPFVVAGATMIHLLFLHETGSNNPVGLNSDADKIPFHPYFSYKDLLGFIIMLTALTMLALFYPNLLGDPDNFTPANPMVTPPHIKPEWYFLFAYAILRSIPNKLGGVLALLSSILVLMVVPILHTSKQRGLTFRPASQLLFWILVADMLVLTWIGGMPVEHPYIIIGQVASVLYFSLFLVLNPLVGWLENKMMNW.

4 consecutive transmembrane segments (helical) span residues 33–53 (FGSL…FLAM), 77–98 (WLIR…YLHI), 113–133 (WNIG…GYVL), and 178–198 (FFAF…IHLL). Residues H83 and H97 each coordinate heme b. Residues H182 and H196 each coordinate heme b. H201 serves as a coordination point for a ubiquinone. 4 helical membrane passes run 226 to 246 (YKDL…ALFY), 288 to 308 (LGGV…PILH), 320 to 340 (ASQL…WIGG), and 347 to 367 (YIII…VLNP).

Belongs to the cytochrome b family. The cytochrome bc1 complex contains 3 respiratory subunits (MT-CYB, CYC1 and UQCRFS1), 2 core proteins (UQCRC1 and UQCRC2) and probably 6 low-molecular weight proteins. It depends on heme b as a cofactor.

The protein localises to the mitochondrion inner membrane. Component of the ubiquinol-cytochrome c reductase complex (complex III or cytochrome b-c1 complex) that is part of the mitochondrial respiratory chain. The b-c1 complex mediates electron transfer from ubiquinol to cytochrome c. Contributes to the generation of a proton gradient across the mitochondrial membrane that is then used for ATP synthesis. The chain is Cytochrome b (mt-cyb) from Anguilla reinhardtii (Speckled longfin eel).